Here is a 245-residue protein sequence, read N- to C-terminus: Cytochrome c oxidase subunit 2 (245 aa).

The Mitochondrial intermembrane segment spans residues 1–36; it reads MYMLNNMLNDVPTPWGMFFQDSATPNMEGMMELHNN. Residues 37–56 form a helical membrane-spanning segment; that stretch reads VMFYLCMMLGFVSYMLYNML. Over 57–76 the chain is Mitochondrial matrix; it reads TTYNHSVLPYKYLYHGQFIE. A helical membrane pass occupies residues 77–101; it reads IVWTTFPAMILLIIAFPSFILLYIC. The Mitochondrial intermembrane portion of the chain corresponds to 102 to 245; it reads DEVIAPAMTI…GEFLAWIDEQ (144 aa). Cu cation-binding residues include His-180, Cys-215, Glu-217, Cys-219, His-223, and Met-226. A Mg(2+)-binding site is contributed by Glu-217.

This sequence belongs to the cytochrome c oxidase subunit 2 family. In terms of assembly, component of the cytochrome c oxidase (complex IV, CIV), a multisubunit enzyme composed of a catalytic core of 3 subunits and several supernumerary subunits. The complex exists as a monomer or a dimer and forms supercomplexes (SCs) in the inner mitochondrial membrane with ubiquinol-cytochrome c oxidoreductase (cytochrome b-c1 complex, complex III, CIII). The cofactor is Cu cation.

The protein resides in the mitochondrion inner membrane. The catalysed reaction is 4 Fe(II)-[cytochrome c] + O2 + 8 H(+)(in) = 4 Fe(III)-[cytochrome c] + 2 H2O + 4 H(+)(out). In terms of biological role, component of the cytochrome c oxidase, the last enzyme in the mitochondrial electron transport chain which drives oxidative phosphorylation. The respiratory chain contains 3 multisubunit complexes succinate dehydrogenase (complex II, CII), ubiquinol-cytochrome c oxidoreductase (cytochrome b-c1 complex, complex III, CIII) and cytochrome c oxidase (complex IV, CIV), that cooperate to transfer electrons derived from NADH and succinate to molecular oxygen, creating an electrochemical gradient over the inner membrane that drives transmembrane transport and the ATP synthase. Cytochrome c oxidase is the component of the respiratory chain that catalyzes the reduction of oxygen to water. Electrons originating from reduced cytochrome c in the intermembrane space (IMS) are transferred via the dinuclear copper A center (CU(A)) of subunit 2 and heme A of subunit 1 to the active site in subunit 1, a binuclear center (BNC) formed by heme A3 and copper B (CU(B)). The BNC reduces molecular oxygen to 2 water molecules using 4 electrons from cytochrome c in the IMS and 4 protons from the mitochondrial matrix. In Dekkera bruxellensis (Brettanomyces custersii), this protein is Cytochrome c oxidase subunit 2 (COX2).